The chain runs to 520 residues: Putative cytochrome P450 CYP13A4 (520 aa).

Cysteine 464 is a binding site for heme.

This sequence belongs to the cytochrome P450 family. The cofactor is heme.

Cytochromes P450 are a group of heme-thiolate monooxygenases. They oxidize a variety of structurally unrelated compounds, including steroids, fatty acids, and xenobiotics. This Caenorhabditis elegans protein is Putative cytochrome P450 CYP13A4 (cyp-13A4).